We begin with the raw amino-acid sequence, 576 residues long: Homeobox protein invected (576 aa).

Disordered regions lie at residues 1–68 (MSTL…DEQT), 80–102 (EVEE…NSVL), 305–344 (GGSV…LAQS), 364–410 (NSND…GEDS), and 426–476 (SDRP…RPRT). Positions 80–91 (EVEEEHDLDLED) are enriched in acidic residues. Composition is skewed to low complexity over residues 309–325 (SGSS…TNGN), 364–381 (NSND…TNTS), and 395–405 (AGAGATGASGK). Positions 450 to 468 (AGGGGGGVEKGEAADGGGV) are enriched in gly residues. The segment at residues 471-530 (DKRPRTAFSGTQLARLKHEFNENRYLTEKRRQQLSGELGLNEAQIKIWFQNKRAKLKKSS) is a DNA-binding region (homeobox).

It belongs to the engrailed homeobox family. As to expression, expressed in row 6/7 of the embryonic neuroectoderm.

Its subcellular location is the nucleus. In terms of biological role, engrailed (en) and invected (inv) are functionally redundant transcription factors in neuronal precursor cell NB5-3 specification. Inv is unable to substitute for en in other regulatory processes such as maintaining gsb expression in the neuroectoderm after stage 10 of embryogenesis. Maintenance of gsb expression in row 5 of the neuroectoderm involves an as yet unidentified short range signaling molecule. The sequence is that of Homeobox protein invected (inv) from Drosophila melanogaster (Fruit fly).